The following is a 76-amino-acid chain: MKNILFRINELSKKEKATGLTVDEKQEQQMLRQNYTETFRGSLDSILLNTKIVDQNGLNVTPAALQDAQIRLKLSK.

This sequence belongs to the UPF0291 family.

It localises to the cytoplasm. The polypeptide is UPF0291 protein BC_1827 (Bacillus cereus (strain ATCC 14579 / DSM 31 / CCUG 7414 / JCM 2152 / NBRC 15305 / NCIMB 9373 / NCTC 2599 / NRRL B-3711)).